An 86-amino-acid chain; its full sequence is High affinity immunoglobulin epsilon receptor subunit gamma (86 aa).

The N-terminal stretch at 1–18 (MYPAVVLLLLLLVEQAAA) is a signal peptide. Residues 19-23 (LGEPQ) are Extracellular-facing. A helical transmembrane segment spans residues 24–44 (LCYILDAILFLYGIILTLLYC). Residues 45-86 (RLKIQVRKATVASYEKPDGIYTGLSTRNQETYETLKHEKPPQ) lie on the Cytoplasmic side of the membrane. One can recognise an ITAM domain in the interval 54 to 82 (TVASYEKPDGIYTGLSTRNQETYETLKHE). Y65 bears the Phosphotyrosine mark. Position 69 is a phosphoserine (S69). The residue at position 76 (Y76) is a Phosphotyrosine. Residue T78 is modified to Phosphothreonine.

Belongs to the CD3Z/FCER1G family. In terms of assembly, igE Fc receptor is a tetramer of an alpha chain, a beta chain, and two disulfide linked gamma chains. Associates with FCGR1A; forms a functional signaling complex. The signaling subunit of immunoglobulin gamma (IgG) Fc receptor complex. As a homodimer or a heterodimer of CD247 and FCER1G, associates with the ligand binding subunit FCGR3A to form a functional receptor complex. Associates with CLEC6A. Interacts with CLEC4E. Interacts (via ITAM domain) with SYK (via SH2 domains); activates SYK, enabling integrin-mediated activation of neutrophils and macrophages. Interacts with CSF2RB and recruits SYK in response to IL3 stimulation; this interaction is direct. Interacts with CD300LH; the interaction may be indirect. Interacts with CD300LD. Interacts with TARM1.

It localises to the cell membrane. Adapter protein containing an immunoreceptor tyrosine-based activation motif (ITAM) that transduces activation signals from various immunoreceptors. As a component of the high-affinity immunoglobulin E (IgE) receptor, mediates allergic inflammatory signaling in mast cells. As a constitutive component of interleukin-3 receptor complex, selectively mediates interleukin 4/IL4 production by basophils priming T-cells toward effector T-helper 2 subset. Associates with pattern recognition receptors CLEC4D and CLEC4E to form a functional signaling complex in myeloid cells. Binding of mycobacterial trehalose 6,6'-dimycolate (TDM) to this receptor complex leads to phosphorylation of ITAM, triggering activation of SYK, CARD9 and NF-kappa-B, consequently driving maturation of antigen-presenting cells and shaping antigen-specific priming of T-cells toward effector T-helper 1 and T-helper 17 cell subtypes. May function cooperatively with other activating receptors. Functionally linked to integrin beta-2/ITGB2-mediated neutrophil activation. Also involved in integrin alpha-2/ITGA2-mediated platelet activation. This is High affinity immunoglobulin epsilon receptor subunit gamma (FCER1G) from Cavia porcellus (Guinea pig).